The following is a 120-amino-acid chain: ATP-dependent Clp protease adapter protein ClpS (120 aa).

Belongs to the ClpS family. In terms of assembly, binds to the N-terminal domain of the chaperone ClpA.

In terms of biological role, involved in the modulation of the specificity of the ClpAP-mediated ATP-dependent protein degradation. The polypeptide is ATP-dependent Clp protease adapter protein ClpS (Pseudomonas fluorescens (strain ATCC BAA-477 / NRRL B-23932 / Pf-5)).